A 784-amino-acid polypeptide reads, in one-letter code: LPS-assembly protein LptD (784 aa).

Positions 1–24 (MKKRIPTLLATMIATALYSQQGLA) are cleaved as a signal peptide. Cystine bridges form between C31–C724 and C173–C725.

Belongs to the LptD family. Component of the lipopolysaccharide transport and assembly complex. Interacts with LptE and LptA. Post-translationally, contains two intramolecular disulfide bonds.

The protein localises to the cell outer membrane. Together with LptE, is involved in the assembly of lipopolysaccharide (LPS) at the surface of the outer membrane. This chain is LPS-assembly protein LptD, found in Shigella flexneri serotype 5b (strain 8401).